The sequence spans 473 residues: Knob-associated histidine-rich protein (473 aa).

An N-terminal signal peptide occupies residues 1–34; that stretch reads MKSFKNKNTLRRKKAFPVFTKILLVSFLVWVLKC. Asn-42 is a glycosylation site (N-linked (GlcNAc...) asparagine). Positions 57–87 are enriched in basic residues; that stretch reads AQKQHEHHHHHHHQHQHQHQAPHQAHHHHHH. Disordered regions lie at residues 57 to 143 and 347 to 473; these read AQKQ…QVFR and SSVN…DGSK. Over residues 95 to 104 the composition is skewed to low complexity; sequence PQVHQQVHGQ. Positions 108–117 are enriched in basic residues; sequence HHHHHHHHHQ. Composition is skewed to basic and acidic residues over residues 354–375 and 396–405; these read KHGDEKHHSSKKHEGNDGEGEK and KDNEDAESVK. Positions 406-422 are enriched in basic residues; that stretch reads SKKHKSHDCEKKKSKKH. 2 stretches are compositionally biased toward basic and acidic residues: residues 423-444 and 453-473; these read KDNEDAESVKSKKSVKEKGEKH and KTNEENKNKEKTNNLKSDGSK.

It localises to the secreted. Its function is as follows. KAHRP might mimick human histidine-rich glycoproteins to anchor host thrombospondin or a parasite analog in a binding complex with the endothelial cell receptor. This chain is Knob-associated histidine-rich protein, found in Plasmodium falciparum.